We begin with the raw amino-acid sequence, 957 residues long: Vacuolar membrane protease (957 aa).

Residues 1-10 (MARYNPFSFT) lie on the Cytoplasmic side of the membrane. A helical membrane pass occupies residues 11–31 (PGPVVFFTTVIYVGLFAALLV). The Vacuolar segment spans residues 32-369 (THLTVPDYPS…RVFVVFQLHT (338 aa)). 3 N-linked (GlcNAc...) asparagine glycosylation sites follow: N48, N105, and N136. The Zn(2+) site is built by H152 and D164. E198 serves as the catalytic Proton acceptor. Residues E199, E224, and H297 each contribute to the Zn(2+) site. A helical transmembrane segment spans residues 370-390 (LFALCVTLLVVAPITLIGLTF). The Cytoplasmic segment spans residues 391 to 423 (GLSKADKNYLLARKAFVYSSDDDNPVQLYGWRG). A helical membrane pass occupies residues 424-444 (FFRFPIIFISATAVVVALAYL). Residues 445-450 (LVRFNA) are Vacuolar-facing. The helical transmembrane segment at 451–471 (FIIYSSPFAVWSMMLSAWFFV) threads the bilayer. Over 472 to 490 (AWFFSRGADAMRPSALQRM) the chain is Cytoplasmic. Residues 491-511 (YALIWLFIGSFVLLTIVTVFV) traverse the membrane as a helical segment. Residues 512 to 521 (NNYQVVAGYP) are Vacuolar-facing. A helical transmembrane segment spans residues 522–542 (ALFYFAVVFVAIMLSYLELFF). The Cytoplasmic segment spans residues 543-642 (APTKSAYARH…YPGEQEWSGK (100 aa)). Disordered regions lie at residues 559–586 (SRRN…PVAD) and 603–627 (FTRY…SQRL). The span at 603–613 (FTRYGSRRDSA) shows a compositional bias: basic and acidic residues. A helical membrane pass occupies residues 643–663 (LPSWIWIIQLLLLAPLVIVLV). Residues 664-685 (GQVALLLTSALYQTPSDGNSPL) are Vacuolar-facing. A helical transmembrane segment spans residues 686–706 (FIYLAIAALSVLLLAPTGPFI). The Cytoplasmic segment spans residues 707-713 (HRFTYHV). Residues 714 to 734 (PTFLFLVCLGTVIYNLVAFPF) traverse the membrane as a helical segment. The Vacuolar segment spans residues 735-957 (SRDHRLKVYF…LVEGFKRFEI (223 aa)). Residues N782, N818, and N834 are each glycosylated (N-linked (GlcNAc...) asparagine).

It belongs to the peptidase M28 family. Zn(2+) serves as cofactor.

The protein localises to the vacuole membrane. Functionally, may be involved in vacuolar sorting and osmoregulation. In Pyrenophora teres f. teres (strain 0-1) (Barley net blotch fungus), this protein is Vacuolar membrane protease.